The chain runs to 182 residues: MSSICPTCTKRVYAAEAVKACEKQYHKLCLQCFHCHKILQLGQYSERDGQPYCKTDYDRLFRQAGYRGGGVVADSFEPAPKVETTTPVEPTPPPTFLTPTEEVKVQLFPTNCPKCGKKAYFNELKVYNSRDWHKTCFACFSCNKNLVSGQYSEKEGLIYCPRCYQSKFGPSGYTNTGALVLH.

LIM zinc-binding domains lie at S3–Q63 and T110–P170.

It localises to the cell projection. Its subcellular location is the pseudopodium. The protein localises to the cytoplasm. The protein resides in the cell cortex. It is found in the cytoskeleton. Its function is as follows. Binds to F-actin and may modulate the chemotactic response during early development and contribute to the maintenance of the strength of the actin cytoskeleton. In Dictyostelium discoideum (Social amoeba), this protein is LIM domain-containing protein C (limC).